We begin with the raw amino-acid sequence, 584 residues long: AP-1-like transcription factor yap1 (584 aa).

The tract at residues 23-179 (LAALSSNQPP…AFRERKEKHL (157 aa)) is disordered. Residues 35-42 (QQNDKQRS) carry the Bipartite nuclear localization signal motif. A compositionally biased stretch (basic and acidic residues) spans 36–48 (QNDKQRSQAKTDP). A compositionally biased stretch (low complexity) spans 52–67 (PGNMSSGSFSMSPGFN). The short motif at 68–75 (KTHPGSGG) is the Bipartite nuclear localization signal element. A compositionally biased stretch (acidic residues) spans 79 to 94 (GDDESPFLDFNPELDF). Composition is skewed to basic and acidic residues over residues 112-144 (SEEH…DKAA) and 170-179 (AFRERKEKHL). The bZIP domain occupies 154–217 (SEPTSKRKAQ…ERLQVELREY (64 aa)). The interval 159-180 (KRKAQNRAAQRAFRERKEKHLK) is basic motif. The tract at residues 182–189 (LETKVDEL) is leucine-zipper. The interval 211-332 (QVELREYRKR…PSPKVPSVYN (122 aa)) is transcription activation 1. 2 disordered regions span residues 267–379 (IFNG…TKLN) and 418–441 (RGKS…TPGP). A n-CRD region spans residues 284–296 (SSPATSDSQVPGV). The segment covering 300–309 (ETLNGSNNRG) has biased composition (polar residues). Positions 336–362 (SASSHDSSNSCSPSSSSDSHQSQMLSS) are enriched in low complexity. Composition is skewed to polar residues over residues 363 to 379 (NGTS…TKLN) and 422 to 437 (ESVS…NYEQ). Residues 377–480 (KLNDSVQNHH…SQDFGTFFDD (104 aa)) form a transcription activation 2 region. Disulfide bonds link C531/C555, C531/C564, and C555/C564. The c-CRD stretch occupies residues 531–564 (CTKIWDRLQSMEKFRNGEIDVDNLCSELRTKARC). The Nuclear export signal signature appears at 549–556 (IDVDNLCS).

The protein belongs to the bZIP family. YAP subfamily. In terms of processing, depending on the oxidative stress inducing agent, yap1 can undergo two distinct conformational changes, both involving disulfide bond formation, and both masking the nuclear export signal, thus abolishing nuclear export.

The protein localises to the nucleus. It is found in the cytoplasm. Its function is as follows. Transcription activator involved in oxidative stress response and redox homeostasis. Regulates the transcription of genes encoding antioxidant enzymes and components of the cellular thiol-reducing pathways. May be involved in antifungal resistance to voriconazole. In Aspergillus flavus (strain ATCC 200026 / FGSC A1120 / IAM 13836 / NRRL 3357 / JCM 12722 / SRRC 167), this protein is AP-1-like transcription factor yap1.